The following is a 277-amino-acid chain: Ubiquinone biosynthesis protein COQ4, mitochondrial (277 aa).

A mitochondrion-targeting transit peptide spans 1 to 14 (MLTKRALRTTDPYR). Residues His157, Asp158, His161, and Glu173 each coordinate Zn(2+).

This sequence belongs to the COQ4 family. Component of a multi-subunit COQ enzyme complex, composed of at least COQ3, COQ4, COQ5, COQ6, COQ7 and COQ9. Zn(2+) serves as cofactor.

Its subcellular location is the mitochondrion inner membrane. The enzyme catalyses a 4-hydroxy-3-methoxy-5-(all-trans-polyprenyl)benzoate + H(+) = a 2-methoxy-6-(all-trans-polyprenyl)phenol + CO2. Its pathway is cofactor biosynthesis; ubiquinone biosynthesis. Functionally, lyase that catalyzes the C1-decarboxylation of 4-hydroxy-3-methoxy-5-(all-trans-polyprenyl)benzoic acid into 2-methoxy-6-(all-trans-polyprenyl)phenol during ubiquinone biosynthesis. The chain is Ubiquinone biosynthesis protein COQ4, mitochondrial from Ajellomyces capsulatus (strain NAm1 / WU24) (Darling's disease fungus).